The sequence spans 160 residues: Ribosomal RNA large subunit methyltransferase H (160 aa).

S-adenosyl-L-methionine-binding positions include leucine 76, glycine 108, and 127–132 (LGKMTW).

The protein belongs to the RNA methyltransferase RlmH family. As to quaternary structure, homodimer.

It localises to the cytoplasm. The enzyme catalyses pseudouridine(1915) in 23S rRNA + S-adenosyl-L-methionine = N(3)-methylpseudouridine(1915) in 23S rRNA + S-adenosyl-L-homocysteine + H(+). In terms of biological role, specifically methylates the pseudouridine at position 1915 (m3Psi1915) in 23S rRNA. This Rhizobium etli (strain ATCC 51251 / DSM 11541 / JCM 21823 / NBRC 15573 / CFN 42) protein is Ribosomal RNA large subunit methyltransferase H.